A 138-amino-acid chain; its full sequence is Transmembrane protein 170A (138 aa).

Topologically, residues 1–44 (MEGSEAGGGGLLQQILSLRLVPRVGNGTTYSSPLSTFPEMWYGV) are lumenal. Residue asparagine 26 is glycosylated (N-linked (GlcNAc...) asparagine). The chain crosses the membrane as a helical span at residues 45-65 (FLWALVSSLSFHVPAALLALF). Topologically, residues 66-79 (TLRHHKYGRFMSVS) are cytoplasmic. The chain crosses the membrane as a helical span at residues 80–100 (LLLMGIVGPITAGILTSAAIA). At 101–110 (GVYRAAGKKM) the chain is on the lumenal side. A helical membrane pass occupies residues 111-131 (IPFEALIFEVGQTFCVVVVSF). Residues 132–138 (LRILATL) are Cytoplasmic-facing.

This sequence belongs to the TMEM170 family.

The protein localises to the endoplasmic reticulum membrane. The protein resides in the nucleus envelope. Its function is as follows. May regulate membrane morphogenesis in the endoplasmic reticulum (ER) by promoting ER sheet formation at the expense of ER tubules. In Gallus gallus (Chicken), this protein is Transmembrane protein 170A (TMEM170A).